The chain runs to 1413 residues: DNA-directed RNA polymerase subunit beta' (1413 aa).

Zn(2+) is bound by residues Cys70, Cys72, Cys85, and Cys88. 3 residues coordinate Mg(2+): Asp461, Asp463, and Asp465. The Zn(2+) site is built by Cys820, Cys894, Cys901, and Cys904.

This sequence belongs to the RNA polymerase beta' chain family. As to quaternary structure, the RNAP catalytic core consists of 2 alpha, 1 beta, 1 beta' and 1 omega subunit. When a sigma factor is associated with the core the holoenzyme is formed, which can initiate transcription. Requires Mg(2+) as cofactor. It depends on Zn(2+) as a cofactor.

It catalyses the reaction RNA(n) + a ribonucleoside 5'-triphosphate = RNA(n+1) + diphosphate. In terms of biological role, DNA-dependent RNA polymerase catalyzes the transcription of DNA into RNA using the four ribonucleoside triphosphates as substrates. The polypeptide is DNA-directed RNA polymerase subunit beta' (Cupriavidus metallidurans (strain ATCC 43123 / DSM 2839 / NBRC 102507 / CH34) (Ralstonia metallidurans)).